Here is a 252-residue protein sequence, read N- to C-terminus: Hydroxyacylglutathione hydrolase (252 aa).

Residues histidine 54, histidine 56, aspartate 58, histidine 59, histidine 111, aspartate 128, and histidine 166 each coordinate Zn(2+).

It belongs to the metallo-beta-lactamase superfamily. Glyoxalase II family. As to quaternary structure, monomer. It depends on Zn(2+) as a cofactor.

The enzyme catalyses an S-(2-hydroxyacyl)glutathione + H2O = a 2-hydroxy carboxylate + glutathione + H(+). The protein operates within secondary metabolite metabolism; methylglyoxal degradation; (R)-lactate from methylglyoxal: step 2/2. Its function is as follows. Thiolesterase that catalyzes the hydrolysis of S-D-lactoyl-glutathione to form glutathione and D-lactic acid. The chain is Hydroxyacylglutathione hydrolase from Vibrio vulnificus (strain CMCP6).